A 209-amino-acid chain; its full sequence is ATP-dependent Clp protease proteolytic subunit (209 aa).

The active-site Nucleophile is the Ser-106. His-131 is an active-site residue.

Belongs to the peptidase S14 family. Fourteen ClpP subunits assemble into 2 heptameric rings which stack back to back to give a disk-like structure with a central cavity, resembling the structure of eukaryotic proteasomes.

It localises to the cytoplasm. It catalyses the reaction Hydrolysis of proteins to small peptides in the presence of ATP and magnesium. alpha-casein is the usual test substrate. In the absence of ATP, only oligopeptides shorter than five residues are hydrolyzed (such as succinyl-Leu-Tyr-|-NHMec, and Leu-Tyr-Leu-|-Tyr-Trp, in which cleavage of the -Tyr-|-Leu- and -Tyr-|-Trp bonds also occurs).. In terms of biological role, cleaves peptides in various proteins in a process that requires ATP hydrolysis. Has a chymotrypsin-like activity. Plays a major role in the degradation of misfolded proteins. The chain is ATP-dependent Clp protease proteolytic subunit from Brucella suis biovar 1 (strain 1330).